The following is a 1163-amino-acid chain: Actin cross-linking toxin VgrG1 (1163 aa).

The 436-residue stretch at 728–1163 folds into the ACD domain; it reads TPDFPTHFPK…NPQEWQRIIA (436 aa). 739 to 743 contributes to the ATP binding site; that stretch reads SIGIE. The Mg(2+) site is built by glutamate 743 and glutamate 805. Serine 808 lines the ATP pocket. Position 889 (glutamine 889) interacts with Mg(2+). Arginine 995 lines the ATP pocket. Glutamate 1066 is a binding site for Mg(2+).

This sequence belongs to the VgrG protein family. Interacts with protein VC1417. Requires Mg(2+) as cofactor.

It is found in the secreted. The protein localises to the host cytoplasm. The protein resides in the host cytosol. Part of the type VI secretion system (T6SS) specialized secretion system, which delivers several virulence factors in both prokaryotic and eukaryotic cells during infection. Forms the spike at the tip of the elongating tube probably formed by hemolysin co-regulated protein/Hcp. Allows the delivery of the TseL antibacterial toxin to target cells where it exerts its toxicity. Also acts directly as an actin-directed toxin that catalyzes the covalent cross-linking of host cytoplasmic monomeric actin. Mediates the cross-link between 'Lys-50' of one monomer and 'Glu-270' of another actin monomer, resulting in formation of highly toxic actin oligomers that cause cell rounding. The toxin can be highly efficient at very low concentrations by acting on formin homology family proteins: toxic actin oligomers bind with high affinity to formins and adversely affect both nucleation and elongation abilities of formins, causing their potent inhibition in both profilin-dependent and independent manners. Acts as an acid--amino-acid ligase that transfers the gamma-phosphoryl group of ATP to the 'Glu-270' actin residue, resulting in the formation of an activated acyl phosphate intermediate. This intermediate is further hydrolyzed and the energy of hydrolysis is utilized for the formation of the amide bond between actin subunits. The chain is Actin cross-linking toxin VgrG1 from Vibrio cholerae serotype O1 (strain ATCC 39315 / El Tor Inaba N16961).